The chain runs to 207 residues: Sodium/potassium-transporting ATPase subunit beta-1-interacting protein 1 (207 aa).

The next 3 membrane-spanning stretches (helical) occupy residues 2-22, 35-55, and 62-82; these read GRCSGRCTLVGICCLQLAAAL, APILANFLHIMVVILGILGTL, and LILYSIWLALWVAWNAFIICF. An N-linked (GlcNAc...) asparagine glycan is attached at N100. A helical membrane pass occupies residues 147–167; it reads ALSSALQIFLALFGFVYACYV.

This sequence belongs to the NKAIN family. As to quaternary structure, interacts with atp1b1 C-terminus.

The protein resides in the cell membrane. The protein is Sodium/potassium-transporting ATPase subunit beta-1-interacting protein 1 (nkain1) of Xenopus laevis (African clawed frog).